We begin with the raw amino-acid sequence, 668 residues long: Fructose-1,6-bisphosphatase class 3 (668 aa).

This sequence belongs to the FBPase class 3 family. It depends on Mn(2+) as a cofactor.

The enzyme catalyses beta-D-fructose 1,6-bisphosphate + H2O = beta-D-fructose 6-phosphate + phosphate. It functions in the pathway carbohydrate biosynthesis; gluconeogenesis. The protein is Fructose-1,6-bisphosphatase class 3 of Clostridium botulinum (strain Loch Maree / Type A3).